The primary structure comprises 205 residues: Carboxysome shell protein CsoS1D (205 aa).

2 BMC circularly permuted domains span residues glutamate 3 to tyrosine 100 and valine 106 to serine 205. A Gates the pore motif is present at residues glutamate 68 to arginine 69.

Belongs to the EutL/PduB family. Homotrimer. Forms a dimer of stacked trimers, the same faces interact. Probably forms a CsoS1-CsoS1D-CsoS2 complex.

Its subcellular location is the carboxysome. Functionally, part of the carboxysome shell, a polyhedral inclusion where RuBisCO (ribulose bisphosphate carboxylase, cbbL-cbbS) is sequestered. It may control transport of RuBisCO reactants in and out of the carboxysome. This chain is Carboxysome shell protein CsoS1D, found in Hydrogenovibrio crunogenus (strain DSM 25203 / XCL-2) (Thiomicrospira crunogena).